The chain runs to 395 residues: Flagellin B (395 aa).

This sequence belongs to the bacterial flagellin family.

The protein localises to the secreted. The protein resides in the bacterial flagellum. Flagellin is the subunit protein which polymerizes to form the filaments of bacterial flagella. The chain is Flagellin B (flaB) from Rhizobium meliloti (Ensifer meliloti).